The primary structure comprises 305 residues: Methionyl-tRNA formyltransferase (305 aa).

(6S)-5,6,7,8-tetrahydrofolate is bound at residue 108 to 111 (SLLP).

This sequence belongs to the Fmt family.

It catalyses the reaction L-methionyl-tRNA(fMet) + (6R)-10-formyltetrahydrofolate = N-formyl-L-methionyl-tRNA(fMet) + (6S)-5,6,7,8-tetrahydrofolate + H(+). In terms of biological role, attaches a formyl group to the free amino group of methionyl-tRNA(fMet). The formyl group appears to play a dual role in the initiator identity of N-formylmethionyl-tRNA by promoting its recognition by IF2 and preventing the misappropriation of this tRNA by the elongation apparatus. In Thermus thermophilus (strain ATCC BAA-163 / DSM 7039 / HB27), this protein is Methionyl-tRNA formyltransferase.